A 144-amino-acid chain; its full sequence is Large ribosomal subunit protein uL16 (144 aa).

The protein belongs to the universal ribosomal protein uL16 family. In terms of assembly, part of the 50S ribosomal subunit.

Binds 23S rRNA and is also seen to make contacts with the A and possibly P site tRNAs. The chain is Large ribosomal subunit protein uL16 from Bacillus licheniformis (strain ATCC 14580 / DSM 13 / JCM 2505 / CCUG 7422 / NBRC 12200 / NCIMB 9375 / NCTC 10341 / NRRL NRS-1264 / Gibson 46).